The primary structure comprises 189 residues: 3-isopropylmalate dehydratase small subunit (189 aa).

This sequence belongs to the LeuD family. LeuD type 1 subfamily. In terms of assembly, heterodimer of LeuC and LeuD.

It carries out the reaction (2R,3S)-3-isopropylmalate = (2S)-2-isopropylmalate. It participates in amino-acid biosynthesis; L-leucine biosynthesis; L-leucine from 3-methyl-2-oxobutanoate: step 2/4. Functionally, catalyzes the isomerization between 2-isopropylmalate and 3-isopropylmalate, via the formation of 2-isopropylmaleate. This chain is 3-isopropylmalate dehydratase small subunit, found in Staphylococcus epidermidis (strain ATCC 35984 / DSM 28319 / BCRC 17069 / CCUG 31568 / BM 3577 / RP62A).